A 284-amino-acid chain; its full sequence is Acetylglutamate kinase (284 aa).

Substrate-binding positions include 64–65 (GG), R86, and N179.

The protein belongs to the acetylglutamate kinase family. ArgB subfamily.

Its subcellular location is the cytoplasm. The catalysed reaction is N-acetyl-L-glutamate + ATP = N-acetyl-L-glutamyl 5-phosphate + ADP. Its pathway is amino-acid biosynthesis; L-arginine biosynthesis; N(2)-acetyl-L-ornithine from L-glutamate: step 2/4. Functionally, catalyzes the ATP-dependent phosphorylation of N-acetyl-L-glutamate. The protein is Acetylglutamate kinase of Prochlorococcus marinus subsp. pastoris (strain CCMP1986 / NIES-2087 / MED4).